A 140-amino-acid polypeptide reads, in one-letter code: MGRVRTKTVKKSSRQVIEKYYSRMTLDFHTNKKILEEVAIIPSKRLRNKIAGFSTHLMKRIQKGPVRGISLKLQEEERERRMDFVPDESAIKIDDVKVDKETLEMLASLGMSDIAGISQVETQQAMAPAVFGRPAGRYQR.

Belongs to the eukaryotic ribosomal protein eS17 family.

The sequence is that of Small ribosomal subunit protein eS17x (RPS17C) from Arabidopsis thaliana (Mouse-ear cress).